The sequence spans 450 residues: Phosphoglucosamine mutase (450 aa).

Ser-101 (phosphoserine intermediate) is an active-site residue. Mg(2+)-binding residues include Ser-101, Asp-241, Asp-243, and Asp-245. Ser-101 is modified (phosphoserine).

The protein belongs to the phosphohexose mutase family. The cofactor is Mg(2+). In terms of processing, activated by phosphorylation.

It catalyses the reaction alpha-D-glucosamine 1-phosphate = D-glucosamine 6-phosphate. Functionally, catalyzes the conversion of glucosamine-6-phosphate to glucosamine-1-phosphate. In Listeria innocua serovar 6a (strain ATCC BAA-680 / CLIP 11262), this protein is Phosphoglucosamine mutase.